A 276-amino-acid polypeptide reads, in one-letter code: Homeobox-leucine zipper protein HOX22 (276 aa).

Residues 70–130 (AGERKRRFTE…NKRARWRSKQ (61 aa)) constitute a DNA-binding region (homeobox). A leucine-zipper region spans residues 129–173 (KQLEHDYAALRSKYDALHSRVESLKQEKLALTVQLHELRERLRER). The segment at 170 to 212 (LREREERSGNGGAATTAASSSSCNGSGSEEVDDDDDKRNAAAG) is disordered. The segment covering 182–197 (AATTAASSSSCNGSGS) has biased composition (low complexity).

The protein belongs to the HD-ZIP homeobox family. Class I subfamily. In terms of tissue distribution, expressed in seedlings, roots, stems, leaf sheaths and blades and panicles.

Its subcellular location is the nucleus. Its function is as follows. Probable transcription factor. The chain is Homeobox-leucine zipper protein HOX22 (HOX22) from Oryza sativa subsp. japonica (Rice).